The primary structure comprises 313 residues: E3 ubiquitin-protein ligase siah2 (313 aa).

The tract at residues 1 to 49 (MSRPSSAGPCASKPCGKQKQPPPPPPHAPSLPATISGGPGASAPPAPTA) is disordered. Residues 20–29 (QPPPPPPHAP) are compositionally biased toward pro residues. The segment at 69-104 (CPVCFDYVLPPILQCQAGHLVCNQCRQKLSCCPTCR) adopts an RING-type zinc-finger fold. Residues 119–311 (VASAVLFPCK…LGINVTISTC (193 aa)) form an SBD region. The segment at 122–182 (AVLFPCKYAS…VMQHLTHSHK (61 aa)) adopts an SIAH-type zinc-finger fold. Residues cysteine 127, cysteine 134, histidine 146, cysteine 150, cysteine 157, cysteine 164, histidine 176, and histidine 181 each coordinate Zn(2+).

It belongs to the SINA (Seven in absentia) family. As to quaternary structure, homodimer. Widely expressed in early embryos until stage 40. It is then expressed in brain, spinal cord and in the developing and mature eye.

It is found in the cytoplasm. It catalyses the reaction S-ubiquitinyl-[E2 ubiquitin-conjugating enzyme]-L-cysteine + [acceptor protein]-L-lysine = [E2 ubiquitin-conjugating enzyme]-L-cysteine + N(6)-ubiquitinyl-[acceptor protein]-L-lysine.. The protein operates within protein modification; protein ubiquitination. In terms of biological role, E3 ubiquitin-protein ligase that mediates ubiquitination and subsequent proteasomal degradation of target proteins. E3 ubiquitin ligases accept ubiquitin from an E2 ubiquitin-conjugating enzyme in the form of a thioester and then directly transfers the ubiquitin to targeted substrates. Involved in eye morphogenesis, probably triggers the ubiquitin-mediated degradation of different substrates. May play a role in the regulation of the cellular clock function. The sequence is that of E3 ubiquitin-protein ligase siah2 (siah2) from Xenopus laevis (African clawed frog).